The following is a 149-amino-acid chain: Large ribosomal subunit protein bL9 (149 aa).

It belongs to the bacterial ribosomal protein bL9 family.

Its function is as follows. Binds to the 23S rRNA. This is Large ribosomal subunit protein bL9 from Desulforamulus reducens (strain ATCC BAA-1160 / DSM 100696 / MI-1) (Desulfotomaculum reducens).